We begin with the raw amino-acid sequence, 375 residues long: Heat-inducible transcription repressor HrcA (375 aa).

Residues 307 to 318 are compositionally biased toward low complexity; sequence ATDGATHAAASS. Residues 307–331 are disordered; the sequence is ATDGATHAAASSQTENQSGDDTRQA.

Belongs to the HrcA family.

Its function is as follows. Negative regulator of class I heat shock genes (grpE-dnaK-dnaJ and groELS operons). Prevents heat-shock induction of these operons. The polypeptide is Heat-inducible transcription repressor HrcA (Bifidobacterium adolescentis (strain ATCC 15703 / DSM 20083 / NCTC 11814 / E194a)).